Reading from the N-terminus, the 58-residue chain is UPF0337 protein OB2685 (58 aa).

2 stretches are compositionally biased toward basic and acidic residues: residues 1–22 (MSDGMKDKAKAIGKKIKGEAKD) and 30–46 (DPQRKAEGKRDKAKGEA). The segment at 1 to 58 (MSDGMKDKAKAIGKKIKGEAKDQWGSATDDPQRKAEGKRDKAKGEAQDTIADAKNNNK) is disordered.

Belongs to the UPF0337 (CsbD) family.

The sequence is that of UPF0337 protein OB2685 from Oceanobacillus iheyensis (strain DSM 14371 / CIP 107618 / JCM 11309 / KCTC 3954 / HTE831).